The chain runs to 255 residues: Anamorsin homolog (255 aa).

The segment at 1-163 (MPKETLVVSK…VRPNWKSKTD (163 aa)) is N-terminal SAM-like domain. The linker stretch occupies residues 164–185 (KKSPSMIDAAPIDGYISKAPDY). [2Fe-2S] cluster is bound by residues C188, C195, C198, and C200. Residues 188-200 (CSTKPRACANCTC) form a fe-S binding site A region. The [4Fe-4S] cluster site is built by C224, C227, C235, and C238. Short sequence motifs (cx2C motif) lie at residues 224–227 (CGNC) and 235–238 (CESC). Positions 224–238 (CGNCYLGDAFRCESC) are fe-S binding site B.

The protein belongs to the anamorsin family. In terms of assembly, monomer. It depends on [2Fe-2S] cluster as a cofactor. [4Fe-4S] cluster serves as cofactor.

The protein resides in the cytoplasm. The protein localises to the mitochondrion intermembrane space. Its function is as follows. Component of the cytosolic iron-sulfur (Fe-S) protein assembly (CIA) machinery. Required for the maturation of extramitochondrial Fe-S proteins. Part of an electron transfer chain functioning in an early step of cytosolic Fe-S biogenesis, facilitating the de novo assembly of a [4Fe-4S] cluster on the cytosolic Fe-S scaffold complex. Electrons are transferred from NADPH via a FAD- and FMN-containing diflavin oxidoreductase. Together with the diflavin oxidoreductase, also required for the assembly of the diferric tyrosyl radical cofactor of ribonucleotide reductase (RNR), probably by providing electrons for reduction during radical cofactor maturation in the catalytic small subunit. The polypeptide is Anamorsin homolog (Theileria annulata).